The chain runs to 22 residues: Caerin-3.5 (22 aa).

At Lys-22 the chain carries Lysine amide.

In terms of tissue distribution, expressed by the skin dorsal glands.

Its subcellular location is the secreted. Shows significant activity against Gram-positive organisms, but is less effective against Gram-negative organisms. This is Caerin-3.5 from Ranoidea gracilenta (Dainty green tree frog).